Here is an 860-residue protein sequence, read N- to C-terminus: Leucine--tRNA ligase (860 aa).

Residues 42–52 carry the 'HIGH' region motif; the sequence is PYPSGRLHMGH. Residues 619-623 carry the 'KMSKS' region motif; the sequence is KMSKS. Lysine 622 lines the ATP pocket.

Belongs to the class-I aminoacyl-tRNA synthetase family.

It is found in the cytoplasm. The enzyme catalyses tRNA(Leu) + L-leucine + ATP = L-leucyl-tRNA(Leu) + AMP + diphosphate. The protein is Leucine--tRNA ligase of Yersinia pseudotuberculosis serotype I (strain IP32953).